Consider the following 842-residue polypeptide: Taste receptor type 1 member 1 (842 aa).

The N-terminal stretch at 1-19 (MLFWAAHLLLSLQLAVAYC) is a signal peptide. Over 20 to 568 (WAFSCQRTES…EFLGWHEPIS (549 aa)) the chain is Extracellular. Residues asparagine 88, asparagine 89, asparagine 96, asparagine 136, asparagine 292, asparagine 480, and asparagine 530 are each glycosylated (N-linked (GlcNAc...) asparagine). Residues 569–589 (LVLLAANTLLLLLLIGTAGLF) traverse the membrane as a helical segment. Topologically, residues 590–604 (AWRLHTPVVRSAGGR) are cytoplasmic. A helical transmembrane segment spans residues 605–625 (LCFLMLGSLVAGSCSLYSFFG). Residues 626 to 640 (KPTVPACLLRQPLFS) lie on the Extracellular side of the membrane. A helical membrane pass occupies residues 641–661 (LGFAIFLSCLTIRSFQLVIIF). Over 662 to 681 (KFSTKVPTFYHTWAQNHGAG) the chain is Cytoplasmic. The chain crosses the membrane as a helical span at residues 682–702 (IFVIVSSTVHLFLCLTWLAMW). The Extracellular segment spans residues 703–725 (TPRPTREYQRFPHLVILECTEVN). Residues 726–746 (SVGFLVAFAHNILLSISTFVC) form a helical membrane-spanning segment. Residues 747–762 (SYLGKELPENYNEAKC) lie on the Cytoplasmic side of the membrane. A helical transmembrane segment spans residues 763–783 (VTFSLLLHFVSWIAFFTMSSI). Residues 784–789 (YQGSYL) are Extracellular-facing. A helical membrane pass occupies residues 790–810 (PAVNVLAGLATLSGGFSGYFL). The Cytoplasmic portion of the chain corresponds to 811–842 (PKCYVILCRPELNNTEHFQASIQDYTRRCGTT).

This sequence belongs to the G-protein coupled receptor 3 family. TAS1R subfamily. In terms of assembly, forms heterodimers with TAS1R3. As to expression, expressed strongly only in fungiform papillae.

It is found in the cell membrane. In terms of biological role, putative taste receptor. TAS1R1/TAS1R3 responds to the umami taste stimulus (the taste of monosodium glutamate) and also to most of the 20 standard L-amino acids, but not to their D-enantiomers or other compounds. Sequence differences within and between species can significantly influence the selectivity and specificity of taste responses. The sequence is that of Taste receptor type 1 member 1 (Tas1r1) from Mus musculus (Mouse).